We begin with the raw amino-acid sequence, 640 residues long: Probable Ufm1-specific protease (640 aa).

Active-site residues include Cys-467, Asp-591, and His-593.

The protein belongs to the peptidase C78 family.

Functionally, thiol protease which recognizes and hydrolyzes the peptide bond at the C-terminal Gly of ufm-1, a ubiquitin-like modifier protein bound to a number of target proteins. This chain is Probable Ufm1-specific protease, found in Oryza sativa subsp. japonica (Rice).